A 268-amino-acid polypeptide reads, in one-letter code: Nickel import ATP-binding protein NikE (268 aa).

One can recognise an ABC transporter domain in the interval 4–252 (LNVSGLSHHY…SSDAGRVLQN (249 aa)). Residue 45–52 (GRSGCGKS) participates in ATP binding.

It belongs to the ABC transporter superfamily. Nickel importer (TC 3.A.1.5.3) family. In terms of assembly, the complex is composed of two ATP-binding proteins (NikD and NikE), two transmembrane proteins (NikB and NikC) and a solute-binding protein (NikA).

Its subcellular location is the cell inner membrane. It carries out the reaction Ni(2+)(out) + ATP + H2O = Ni(2+)(in) + ADP + phosphate + H(+). Part of the ABC transporter complex NikABCDE involved in nickel import. Responsible for energy coupling to the transport system. In Shigella sonnei (strain Ss046), this protein is Nickel import ATP-binding protein NikE.